The chain runs to 496 residues: Aspartic proteinase (496 aa).

Residues 1–24 (MAKRHLLLVTTCLWALSCALLLHA) form the signal peptide. Residues 25 to 59 (SSDGFLRVNLNKKRLDKEDLTAAKLAQQGNRLLKT) constitute a propeptide, activation peptide. A Peptidase A1 domain is found at 77-493 (YYGVIGLGSP…DFGKDRIGFA (417 aa)). Asp-95 is a catalytic residue. Disulfide bonds link Cys-108–Cys-114 and Cys-273–Cys-277. Asp-282 is an active-site residue. The Saposin B-type domain maps to 307–407 (IISTECKEVV…NQLCERLPSP (101 aa)). Cystine bridges form between Cys-312–Cys-401, Cys-337–Cys-373, Cys-343–Cys-370, and Cys-415–Cys-452. Asn-387 is a glycosylation site (N-linked (GlcNAc...) asparagine).

It belongs to the peptidase A1 family.

The protein resides in the vacuole. Its function is as follows. Involved in the breakdown of propeptides of storage proteins in protein-storage vacuoles. This Oryza sativa subsp. japonica (Rice) protein is Aspartic proteinase (RAP).